Here is a 259-residue protein sequence, read N- to C-terminus: UPF0246 protein VF_2109 (259 aa).

It belongs to the UPF0246 family.

This Aliivibrio fischeri (strain ATCC 700601 / ES114) (Vibrio fischeri) protein is UPF0246 protein VF_2109.